Here is a 544-residue protein sequence, read N- to C-terminus: Chaperonin GroEL 1 (544 aa).

Residues 29–32, 86–90, glycine 413, 479–481, and aspartate 495 contribute to the ATP site; these read TLGP, DGTTT, and NAA.

Belongs to the chaperonin (HSP60) family. In terms of assembly, forms a cylinder of 14 subunits composed of two heptameric rings stacked back-to-back. Interacts with the co-chaperonin GroES.

The protein resides in the cytoplasm. The enzyme catalyses ATP + H2O + a folded polypeptide = ADP + phosphate + an unfolded polypeptide.. Its function is as follows. Together with its co-chaperonin GroES, plays an essential role in assisting protein folding. The GroEL-GroES system forms a nano-cage that allows encapsulation of the non-native substrate proteins and provides a physical environment optimized to promote and accelerate protein folding. This chain is Chaperonin GroEL 1, found in Trichormus variabilis (strain ATCC 29413 / PCC 7937) (Anabaena variabilis).